Consider the following 400-residue polypeptide: Aspartate aminotransferase (400 aa).

L-aspartate is bound by residues glycine 37, tryptophan 126, and asparagine 176. N6-(pyridoxal phosphate)lysine is present on lysine 238. Residue arginine 367 participates in L-aspartate binding.

This sequence belongs to the class-I pyridoxal-phosphate-dependent aminotransferase family. In terms of assembly, homodimer. Pyridoxal 5'-phosphate is required as a cofactor.

Its subcellular location is the cytoplasm. It catalyses the reaction L-aspartate + 2-oxoglutarate = oxaloacetate + L-glutamate. In terms of biological role, catalyzes the reversible conversion of aspartate and 2-oxoglutarate to glutamate and oxaloacetate. Has very weak prephenate aminotransferase activity. This chain is Aspartate aminotransferase, found in Musicola paradisiaca (strain Ech703) (Dickeya paradisiaca).